Here is a 465-residue protein sequence, read N- to C-terminus: MTIHIYNTLTRQKEEFVPLEENKVKMYVCGPTVYNYIHIGNARPPMVFDTVRRYLEYKGYDVQYVSNFTDVDDKLIKAANELGEDVPTIADRFVEAYFEDVTALGCKHATVHPRVTENMDIIIEFIQELVNKGYAYESEGDVYFKTKEFEGYGKLSHQPIADLRHGARIEVGEKKQDPLDFALWKAAKEGEIFWESPWGQGRPGWHIECSAMARKYLGDTIDIHAGGQDLAFPHHENEIAQSEALTGKTFARYWMHNGYININNEKMSKSLGNFILVHDIIKQYDPQLIRFFMLSVHYRHPINFSEELLQSTNNGLERIKTAYGNLKHRMESSTDLTDHNEKWLVEIEKFQTAFEEAMNDDFNTANAITELYNVANYANQYLLEEHTSKVVIEAYVKQLETLFDILGLELTQEELLDEEIEELIQKRIEARKNRDFALSDQIRDDLKGRNIILEDTAQGTRWKRG.

Zn(2+) is bound at residue C29. The 'HIGH' region signature appears at 31-41 (PTVYNYIHIGN). Residues C209, H234, and E238 each contribute to the Zn(2+) site. Residues 266–270 (KMSKS) carry the 'KMSKS' region motif. Position 269 (K269) interacts with ATP. S270 is subject to Phosphoserine.

The protein belongs to the class-I aminoacyl-tRNA synthetase family. In terms of assembly, monomer. It depends on Zn(2+) as a cofactor.

The protein localises to the cytoplasm. It catalyses the reaction tRNA(Cys) + L-cysteine + ATP = L-cysteinyl-tRNA(Cys) + AMP + diphosphate. This Bacillus cereus (strain G9842) protein is Cysteine--tRNA ligase.